Here is a 73-residue protein sequence, read N- to C-terminus: Putative ORF9c protein (73 aa).

The helical transmembrane segment at 47–67 (AAVGELLLLEWLAMAVMLLLL) threads the bilayer.

It localises to the membrane. In terms of biological role, may induce apoptosis in cardiomyocytes when overexpressed ex-vivo. This Homo sapiens (Human) protein is Putative ORF9c protein.